A 364-amino-acid polypeptide reads, in one-letter code: Fructose-bisphosphate aldolase A (364 aa).

Tyr-5 carries the phosphotyrosine modification. Thr-9 carries the phosphothreonine modification. A phosphoserine mark is found at Ser-36 and Ser-39. N6-acetyllysine; alternate is present on Lys-42. Residue Lys-42 forms a Glycyl lysine isopeptide (Lys-Gly) (interchain with G-Cter in SUMO1); alternate linkage. Residue Lys-42 forms a Glycyl lysine isopeptide (Lys-Gly) (interchain with G-Cter in SUMO2); alternate linkage. Residue Arg-43 participates in beta-D-fructose 1,6-bisphosphate binding. A Phosphoserine modification is found at Ser-46. N6-(2-hydroxyisobutyryl)lysine is present on Lys-99. An N6-acetyllysine modification is found at Lys-108. N6-acetyllysine; alternate is present on Lys-111. Lys-111 carries the post-translational modification N6-malonyllysine; alternate. Ser-132 is modified (phosphoserine). Lys-147 carries the N6-(2-hydroxyisobutyryl)lysine modification. The active-site Proton acceptor is Glu-188. Lys-230 functions as the Schiff-base intermediate with dihydroxyacetone-P in the catalytic mechanism. Ser-272 carries the phosphoserine modification. Residues 272-274 (SGG), Ser-301, and Arg-304 each bind beta-D-fructose 1,6-bisphosphate. Residue Lys-312 is modified to N6-malonyllysine. At Lys-330 the chain carries N6-acetyllysine.

The protein belongs to the class I fructose-bisphosphate aldolase family. In terms of assembly, homotetramer. Interacts with SNX9 and WAS. Interacts with FBP2; the interaction blocks FBP2 inhibition by physiological concentrations of AMP and reduces inhibition by Ca(2+).

The protein resides in the cytoplasm. The protein localises to the myofibril. Its subcellular location is the sarcomere. It localises to the i band. It is found in the m line. It carries out the reaction beta-D-fructose 1,6-bisphosphate = D-glyceraldehyde 3-phosphate + dihydroxyacetone phosphate. It participates in carbohydrate degradation; glycolysis; D-glyceraldehyde 3-phosphate and glycerone phosphate from D-glucose: step 4/4. Its function is as follows. Catalyzes the reversible conversion of beta-D-fructose 1,6-bisphosphate (FBP) into two triose phosphate and plays a key role in glycolysis and gluconeogenesis. In addition, may also function as scaffolding protein. The sequence is that of Fructose-bisphosphate aldolase A (ALDOA) from Pan troglodytes (Chimpanzee).